The primary structure comprises 181 residues: Protein Syd (181 aa).

It belongs to the Syd family.

It localises to the cell inner membrane. Interacts with the SecY protein in vivo. May bind preferentially to an uncomplexed state of SecY, thus functioning either as a chelating agent for excess SecY in the cell or as a regulatory factor that negatively controls the translocase function. This chain is Protein Syd, found in Salmonella arizonae (strain ATCC BAA-731 / CDC346-86 / RSK2980).